Here is a 70-residue protein sequence, read N- to C-terminus: Large ribosomal subunit protein bL31 (70 aa).

Residues Cys16, Cys18, Cys38, and Cys41 each contribute to the Zn(2+) site.

The protein belongs to the bacterial ribosomal protein bL31 family. Type A subfamily. In terms of assembly, part of the 50S ribosomal subunit. The cofactor is Zn(2+).

In terms of biological role, binds the 23S rRNA. The chain is Large ribosomal subunit protein bL31 from Saccharopolyspora erythraea (strain ATCC 11635 / DSM 40517 / JCM 4748 / NBRC 13426 / NCIMB 8594 / NRRL 2338).